A 631-amino-acid chain; its full sequence is Nucleoside triphosphatase I (631 aa).

Residues 42–204 (FLGLDSMHSL…TMLVNLLRPG (163 aa)) enclose the Helicase ATP-binding domain. 55–62 (HETGVGKT) is a binding site for ATP. Positions 141–144 (DECH) match the DEXH box motif. One can recognise a Helicase C-terminal domain in the interval 367–532 (KFIDVCLGIL…EFVQLFRVFK (166 aa)). The interval 457–524 (DIFILDMTWN…EIIQSKSKEF (68 aa)) is binding to the cap-specific mRNA (nucleoside-2'-O-)-methyltransferase.

Belongs to the helicase family. NPH I subfamily. As to quaternary structure, monomer. Interacts (via C-terminus) with RAP94/OPG109 (via N-terminus). Interacts with the cap-specific mRNA (nucleoside-2'-O-)-methyltransferase OPG102.

Its subcellular location is the virion. The catalysed reaction is a ribonucleoside 5'-triphosphate + H2O = a ribonucleoside 5'-diphosphate + phosphate + H(+). In terms of biological role, DNA-dependent ATPase that acts as a 5' to 3' translocase on single-stranded DNA and thereby plays a role in transcription termination of viral early genes. Uses forward translocation in concert with the viral RNA polymerase RAP94/OPG109 subunit and the capping enzyme/VTF to catalyze release of UUUUUNU-containing nascent RNA from the elongation complex. In addition, acts as a positive elongation factor to assist transcription through problematic sequences. This is Nucleoside triphosphatase I (OPG123) from Variola virus (isolate Human/India/Ind3/1967) (VARV).